We begin with the raw amino-acid sequence, 393 residues long: Dual specificity mitogen-activated protein kinase kinase 1 (393 aa).

Residues methionine 1–alanine 26 form a disordered region. The span at isoleucine 9–alanine 26 shows a compositional bias: polar residues. The Protein kinase domain occupies phenylalanine 68–isoleucine 361. ATP contacts are provided by residues leucine 74–valine 82 and lysine 97. Residue aspartate 190 is the Proton acceptor of the active site. Serine 218 and serine 222 each carry phosphoserine; by RAF. The segment at glutamate 270–proline 307 is RAF1-binding. Threonine 286 is subject to Phosphothreonine. Threonine 292 carries the phosphothreonine; by MAPK1 modification. Serine 298 is modified (phosphoserine; by PAK).

The protein belongs to the protein kinase superfamily. STE Ser/Thr protein kinase family. MAP kinase kinase subfamily. In terms of assembly, found in a complex with at least BRAF, HRAS, MAP2K1, MAPK3/ERK1 and RGS14. Forms a heterodimer with MAP2K2/MEK2. Forms heterodimers with KSR2 which further dimerize to form tetramers. Interacts with KSR1 or KSR2 and BRAF; the interaction with KSR1 or KSR2 mediates KSR1-BRAF or KSR2-BRAF dimerization. Interacts with ARBB2, LAMTOR3, MAPK1/ERK2 and RAF1. Interacts with MAPK1/ERK2. Interacts with MORG1. Interacts with PPARG. Interacts with isoform 1 of VRK2. Interacts with SGK1. Interacts with BIRC6/bruce. Interacts with KAT7; the interaction promotes KAT7 phosphorylation. Interacts with RAF1 and NEK10; the interaction is required for ERK1/2-signaling pathway activation in response to UV irradiation. Interacts with TRAF3IP3. Interacts with MOS. In terms of processing, phosphorylation at Ser-218 and Ser-222 by MAP kinase kinase kinases (BRAF or MEKK1) positively regulates the kinase activity. Also phosphorylated at Thr-292 by MAPK1/ERK2 and at Ser-298 by PAK. MAPK1/ERK2 phosphorylation of Thr-292 occurs in response to cellular adhesion and leads to inhibition of Ser-298 phosphorylation by PAK. Autophosphorylated at Ser-218 and Ser-222, autophosphosphorylation is promoted by NEK10 following UV irradiation.

The protein resides in the cytoplasm. It is found in the cytoskeleton. Its subcellular location is the microtubule organizing center. The protein localises to the centrosome. It localises to the spindle pole body. The protein resides in the nucleus. It is found in the membrane. It catalyses the reaction L-seryl-[protein] + ATP = O-phospho-L-seryl-[protein] + ADP + H(+). The catalysed reaction is L-threonyl-[protein] + ATP = O-phospho-L-threonyl-[protein] + ADP + H(+). It carries out the reaction L-tyrosyl-[protein] + ATP = O-phospho-L-tyrosyl-[protein] + ADP + H(+). With respect to regulation, ras proteins such as HRAS mediate the activation of RAF proteins such as RAF1 or BRAF which in turn activate extracellular signal-regulated kinases (ERK) through MAPK (mitogen-activated protein kinases) and ERK kinases MAP2K1/MEK1 and MAP2K2/MEK2. Activation occurs through phosphorylation of Ser-218 and Ser-222. MAP2K1/MEK1 binds KSR1 or KSR2 releasing the inhibitory intramolecular interaction between KSR1 or KSR2 protein kinase and N-terminal domains. This allows KSR1 or KSR2 dimerization with BRAF leading to BRAF activation and phosphorylation of MAP2K1. MAP2K1/MEK1 is also the target of negative feed-back regulation by its substrate kinases, such as MAPK1/ERK2. These phosphorylate MAP2K1/MEK1 on Thr-292, thereby facilitating dephosphorylation of the activating residues Ser-218 and Ser-222. Inhibited by serine/threonine phosphatase 2A. Its function is as follows. Dual specificity protein kinase which acts as an essential component of the MAP kinase signal transduction pathway. Binding of extracellular ligands such as growth factors, cytokines and hormones to their cell-surface receptors activates RAS and this initiates RAF1 activation. RAF1 then further activates the dual-specificity protein kinases MAP2K1/MEK1 and MAP2K2/MEK2. Both MAP2K1/MEK1 and MAP2K2/MEK2 function specifically in the MAPK/ERK cascade, and catalyze the concomitant phosphorylation of a threonine and a tyrosine residue in a Thr-Glu-Tyr sequence located in the extracellular signal-regulated kinases MAPK3/ERK1 and MAPK1/ERK2, leading to their activation and further transduction of the signal within the MAPK/ERK cascade. Activates BRAF in a KSR1 or KSR2-dependent manner; by binding to KSR1 or KSR2 releases the inhibitory intramolecular interaction between KSR1 or KSR2 protein kinase and N-terminal domains which promotes KSR1 or KSR2-BRAF dimerization and BRAF activation. Depending on the cellular context, this pathway mediates diverse biological functions such as cell growth, adhesion, survival and differentiation, predominantly through the regulation of transcription, metabolism and cytoskeletal rearrangements. One target of the MAPK/ERK cascade is peroxisome proliferator-activated receptor gamma (PPARG), a nuclear receptor that promotes differentiation and apoptosis. MAP2K1/MEK1 has been shown to export PPARG from the nucleus. The MAPK/ERK cascade is also involved in the regulation of endosomal dynamics, including lysosome processing and endosome cycling through the perinuclear recycling compartment (PNRC), as well as in the fragmentation of the Golgi apparatus during mitosis. This is Dual specificity mitogen-activated protein kinase kinase 1 (MAP2K1) from Cricetulus griseus (Chinese hamster).